The sequence spans 301 residues: Homeobox protein Nkx-2.6 (301 aa).

The segment at 22–135 (ERSCPAASPH…QPKARQRRKP (114 aa)) is disordered. The homeobox DNA-binding region spans 132-191 (RRKPRVLFSQAQVLALERRFKQQRYLSAPEREHLASALQLTSTQVKIWFQNRRYKCKRQR).

Belongs to the NK-2 homeobox family.

It is found in the nucleus. Its function is as follows. Acts as a transcriptional activator. In conjunction with NKX2-5, may play a role in both pharyngeal and cardiac embryonic development. The protein is Homeobox protein Nkx-2.6 (NKX2-6) of Homo sapiens (Human).